The primary structure comprises 37 residues: L-amino-acid oxidase (37 aa).

It belongs to the flavin monoamine oxidase family. FIG1 subfamily. Homodimer; non-covalently linked. FAD is required as a cofactor. In terms of processing, N-Glycosylated. As to expression, expressed by the venom gland.

It is found in the secreted. It carries out the reaction an L-alpha-amino acid + O2 + H2O = a 2-oxocarboxylate + H2O2 + NH4(+). It catalyses the reaction L-leucine + O2 + H2O = 4-methyl-2-oxopentanoate + H2O2 + NH4(+). The enzyme catalyses L-phenylalanine + O2 + H2O = 3-phenylpyruvate + H2O2 + NH4(+). The catalysed reaction is L-tryptophan + O2 + H2O = indole-3-pyruvate + H2O2 + NH4(+). It carries out the reaction L-methionine + O2 + H2O = 4-methylsulfanyl-2-oxobutanoate + H2O2 + NH4(+). It catalyses the reaction L-isoleucine + O2 + H2O = (S)-3-methyl-2-oxopentanoate + H2O2 + NH4(+). The enzyme catalyses L-arginine + O2 + H2O = 5-guanidino-2-oxopentanoate + H2O2 + NH4(+). The catalysed reaction is L-histidine + O2 + H2O = 3-(imidazol-5-yl)pyruvate + H2O2 + NH4(+). It carries out the reaction L-valine + O2 + H2O = 3-methyl-2-oxobutanoate + H2O2 + NH4(+). Functionally, catalyzes an oxidative deamination of predominantly hydrophobic and aromatic L-amino acids, thus producing hydrogen peroxide that may contribute to the diverse toxic effects of this enzyme. Is highly active on L-Leu, L-Met, moderately active on L-Arg, L-Trp, L-Phe, L-Val, L-His, and L-Ile, and is weakly or not active on L-Cys, L-Lys, L-Ala, L-Thr, L-Asp, L-Ser, and L-Pro. Exhibits diverse biological activities, such as hemorrhage, edema, apoptosis of vascular endothelial cells or tumor cell lines, as well as regulation of platelet aggregation. Effects of snake L-amino oxidases on platelets are controversial, since they either induce aggregation or inhibit agonist-induced aggregation. These different effects are probably due to different experimental conditions. This protein induce hemolysis and has antibacterial and antiparasitic activities (against the Gram-positive S.aureus). Tested in vivo, this protein significantly inhibits Ehrlich ascite tumors growth and induces an influx of polymorphonuclear cells, as well as spontaneous liberation of hydrogen peroxide from peritoneal macrophages. This chain is L-amino-acid oxidase, found in Bothrops jararaca (Jararaca).